A 338-amino-acid chain; its full sequence is Probable tRNA pseudouridine synthase B (338 aa).

Asp78 serves as the catalytic Nucleophile. The PUA domain maps to Leu245–Met320.

This sequence belongs to the pseudouridine synthase TruB family. Type 2 subfamily.

The catalysed reaction is uridine(55) in tRNA = pseudouridine(55) in tRNA. In terms of biological role, could be responsible for synthesis of pseudouridine from uracil-55 in the psi GC loop of transfer RNAs. The polypeptide is Probable tRNA pseudouridine synthase B (Methanosarcina acetivorans (strain ATCC 35395 / DSM 2834 / JCM 12185 / C2A)).